The sequence spans 349 residues: Peroxidase 7 (349 aa).

The first 22 residues, 1-22 (MKLAVVSVVVILGVLVAWPVSA), serve as a signal peptide directing secretion. 4 disulfide bridges follow: C60-C136, C93-C98, C142-C341, and C220-C252. H91 (proton acceptor) is an active-site residue. 5 residues coordinate Ca(2+): D92, V95, G97, D99, and S101. Residue P183 participates in substrate binding. Heme b is bound at residue H213. Residue T214 participates in Ca(2+) binding. An N-linked (GlcNAc...) asparagine glycan is attached at N231. The Ca(2+) site is built by D262, T265, and D270.

It belongs to the peroxidase family. Classical plant (class III) peroxidase subfamily. Heme b serves as cofactor. It depends on Ca(2+) as a cofactor.

The protein resides in the secreted. The catalysed reaction is 2 a phenolic donor + H2O2 = 2 a phenolic radical donor + 2 H2O. In terms of biological role, removal of H(2)O(2), oxidation of toxic reductants, biosynthesis and degradation of lignin, suberization, auxin catabolism, response to environmental stresses such as wounding, pathogen attack and oxidative stress. These functions might be dependent on each isozyme/isoform in each plant tissue. This is Peroxidase 7 (PER7) from Arabidopsis thaliana (Mouse-ear cress).